The sequence spans 184 residues: Ribosome-recycling factor (184 aa).

It belongs to the RRF family.

The protein localises to the cytoplasm. Functionally, responsible for the release of ribosomes from messenger RNA at the termination of protein biosynthesis. May increase the efficiency of translation by recycling ribosomes from one round of translation to another. This chain is Ribosome-recycling factor, found in Hyphomonas neptunium (strain ATCC 15444).